The following is a 605-amino-acid chain: ABC transporter E family member 2 (605 aa).

The 4Fe-4S ferredoxin-type domain maps to 46-75; it reads KLAFISEELCIGCGICVKKCPFEAIQIINL. ABC transporter domains are found at residues 70–315 and 344–568; these read IQII…FLAG and IQSY…LSHL. Residues 110–117 and 381–388 each bind ATP; these read GTNGIGKS and GENGTGKT.

The protein belongs to the ABC transporter superfamily. ABCE family. As to expression, expressed in roots, stems, leaves, flowers and siliques.

Its subcellular location is the membrane. In Arabidopsis thaliana (Mouse-ear cress), this protein is ABC transporter E family member 2 (ABCE2).